A 557-amino-acid polypeptide reads, in one-letter code: CDP-diacylglycerol--glycerol-3-phosphate 3-phosphatidyltransferase, mitochondrial (557 aa).

The N-terminal 25 residues, Met1–Ala25, are a transit peptide targeting the mitochondrion. Ala121–Gly128 is an ATP binding site. Positions Thr212–Tyr238 constitute a PLD phosphodiesterase 1 domain. Active-site residues include His217, Lys219, and Asp224. The segment at Thr322–Pro346 is disordered. Polar residues predominate over residues Phe323–Leu333. A compositionally biased stretch (basic and acidic residues) spans His336–Pro346. The 34-residue stretch at Ala461–Ser494 folds into the PLD phosphodiesterase 2 domain.

It belongs to the CDP-alcohol phosphatidyltransferase class-II family.

It is found in the mitochondrion. It carries out the reaction a CDP-1,2-diacyl-sn-glycerol + sn-glycerol 3-phosphate = a 1,2-diacyl-sn-glycero-3-phospho-(1'-sn-glycero-3'-phosphate) + CMP + H(+). Its pathway is phospholipid metabolism; phosphatidylglycerol biosynthesis; phosphatidylglycerol from CDP-diacylglycerol: step 1/2. Its activity is regulated as follows. Activated by calcium and magnesium and inhibited by other bivalent cations. Functionally, functions in the biosynthesis of the anionic phospholipids phosphatidylglycerol and cardiolipin. The chain is CDP-diacylglycerol--glycerol-3-phosphate 3-phosphatidyltransferase, mitochondrial (PGS1) from Gallus gallus (Chicken).